We begin with the raw amino-acid sequence, 435 residues long: MALPCAFLSAAAAANATSFSSSPESRRCRSVHRVPSRPRPPLAPPARVMGKGNSKRKAANTRLWMRLDRRGGCEMILCDKSFVARRSGLPARDLRVLGPLLSRSPSILAREKAMVINLEFVRAIVTADEVLVLEPLAQEVLPFVEKLRKHFPLKSLDVDDVSTHMHTENQDGELAQDVSCYEVEGANHELPFEFQVLDFALEAVCLSYNSTISDLNRSAIAVLDDLMKSVSTRNLERVRSLKSSLTRLLASVQKVRDEVEHILDDNEAMAHLCTARKTKGQKDLLNTILFPETRLCRTHSSIENSTGIRTCVPSDSDAHILDMLLEAYFKQLDGIRNRIFLVRQYIVDTEDYISIQLDNKRNELLGLQLTLIIASFGIAINTFIAAAFAMNIPHRGYHFVIGVPFGQFVGATSFLCMSIVILLFTYAWRNRLLCT.

The segment at 19–54 (FSSSPESRRCRSVHRVPSRPRPPLAPPARVMGKGNS) is disordered. The next 2 helical transmembrane spans lie at 369–389 (LTLI…AAFA) and 408–428 (FVGA…TYAW).

Belongs to the CorA metal ion transporter (MIT) (TC 1.A.35.5) family.

Its subcellular location is the membrane. In terms of biological role, putative magnesium transporter. This Oryza sativa subsp. indica (Rice) protein is Putative magnesium transporter MRS2-H (MRS2-H).